Consider the following 102-residue polypeptide: Large ribosomal subunit protein uL24 (102 aa).

Belongs to the universal ribosomal protein uL24 family. As to quaternary structure, part of the 50S ribosomal subunit.

Functionally, one of two assembly initiator proteins, it binds directly to the 5'-end of the 23S rRNA, where it nucleates assembly of the 50S subunit. In terms of biological role, one of the proteins that surrounds the polypeptide exit tunnel on the outside of the subunit. In Cupriavidus necator (strain ATCC 17699 / DSM 428 / KCTC 22496 / NCIMB 10442 / H16 / Stanier 337) (Ralstonia eutropha), this protein is Large ribosomal subunit protein uL24.